We begin with the raw amino-acid sequence, 113 residues long: Carboxysome shell protein CcmK1 (113 aa).

Residues 4–90 (AVGMIETLGF…PHENLEYVLP (87 aa)) enclose the BMC domain.

This sequence belongs to the bacterial microcompartments protein family. CcmK subfamily. As to quaternary structure, homohexamer. Interacts preferentially with CcmK2 and CcmK4a rather than itself in vitro.

Its subcellular location is the carboxysome. Its function is as follows. One of the shell proteins of the carboxysome, a polyhedral inclusion where RuBisCO (ribulose bisphosphate carboxylase, rbcL-rbcS) is sequestered. Assembles into hexamers which make sheets that form the facets of the polyhedral carboxysome. The hexamer central pore probably regulates metabolite flux. The polypeptide is Carboxysome shell protein CcmK1 (Thermosynechococcus vestitus (strain NIES-2133 / IAM M-273 / BP-1)).